The chain runs to 430 residues: MSFRTLSSLLPSPQNSEVSESSAFSRQSKENIKDTIILDKLRPENLPVASISDFVPLRQRDISLEAPFPSTSQINQTYVKTKAFLDSLLTKKSSLQLSSIANKDIVKREAISSVKSGTQRSVKVIEHKKDPLQPVTHRKRKVVVPSEEIQAPILHKSDDPSIKPTKEELDKWRIPSAISNWKNPNGFAISLDNRVAIESIKTDCPDNDKKDNFLLLSEALDEAEREARQRINIKQEAYKELEKEETLKKEQRLRHLAERARQDRENRRQYENEDHYVREMERNQRRRAERELERSNKMSTAEKLRRLAYQQGRDVSDKVVLNAAKATETPDLQYDSRLFKKAASSVASSSNQIFDHPLFNNSQIDNIYRPTTGSNLENEDIVDRLSNKKGRTGPVEFSAADDGKNAEQNEEDNEHAREYGLQVRKKPHTS.

The span at 1-26 (MSFRTLSSLLPSPQNSEVSESSAFSR) shows a compositional bias: polar residues. Disordered regions lie at residues 1–28 (MSFR…SRQS), 280–299 (MERN…NKMS), and 370–430 (PTTG…PHTS).

This sequence belongs to the SNW family. As to quaternary structure, associated with the spliceosome.

Its subcellular location is the nucleus. Involved in pre-mRNA splicing. The polypeptide is Pre-mRNA-processing protein 45 (PRP45) (Kluyveromyces lactis (strain ATCC 8585 / CBS 2359 / DSM 70799 / NBRC 1267 / NRRL Y-1140 / WM37) (Yeast)).